Here is a 334-residue protein sequence, read N- to C-terminus: Mevalonate kinase (334 aa).

110 to 120 (PVGAGLGSSAA) contacts ATP. D161 acts as the Proton acceptor in catalysis.

The protein belongs to the GHMP kinase family. Mevalonate kinase subfamily. As to quaternary structure, homodimer. Mg(2+) is required as a cofactor.

The protein localises to the cytoplasm. The enzyme catalyses (R)-mevalonate + ATP = (R)-5-phosphomevalonate + ADP + H(+). It functions in the pathway isoprenoid biosynthesis; isopentenyl diphosphate biosynthesis via mevalonate pathway; isopentenyl diphosphate from (R)-mevalonate: step 1/3. Its function is as follows. Catalyzes the phosphorylation of (R)-mevalonate (MVA) to (R)-mevalonate 5-phosphate (MVAP). Functions in the mevalonate (MVA) pathway leading to isopentenyl diphosphate (IPP), a key precursor for the biosynthesis of isoprenoid compounds such as archaeal membrane lipids. This is Mevalonate kinase from Thermococcus onnurineus (strain NA1).